A 254-amino-acid polypeptide reads, in one-letter code: Small ribosomal subunit protein uS2 (254 aa).

A disordered region spans residues 228–254; it reads DRGAEKEVEAAEEAPAAEAEAAPATEE. A compositionally biased stretch (low complexity) spans 240–254; it reads EAPAAEAEAAPATEE.

The protein belongs to the universal ribosomal protein uS2 family.

In Flavobacterium johnsoniae (strain ATCC 17061 / DSM 2064 / JCM 8514 / BCRC 14874 / CCUG 350202 / NBRC 14942 / NCIMB 11054 / UW101) (Cytophaga johnsonae), this protein is Small ribosomal subunit protein uS2.